A 215-amino-acid polypeptide reads, in one-letter code: Chitooligosaccharide deacetylase (215 aa).

The NodB homology domain maps to 18-209; that stretch reads PSVYLTFDDG…ALHDRGFIIR (192 aa). Aspartate 25 acts as the Proton acceptor in catalysis. Positions 76 and 80 each coordinate a divalent metal cation. Histidine 171 functions as the Proton donor in the catalytic mechanism.

Belongs to the polysaccharide deacetylase family.

The protein localises to the cytoplasm. Its function is as follows. Is involved in generating a small heat-stable compound (Nod), an acylated oligomer of N-acetylglucosamine, that stimulates mitosis in various plant protoplasts. In Sinorhizobium fredii (strain NBRC 101917 / NGR234), this protein is Chitooligosaccharide deacetylase (nodB).